Here is a 580-residue protein sequence, read N- to C-terminus: Putative multidrug export ATP-binding/permease protein YgaD (580 aa).

Over 1–17 (MGVMKRYMQFVKPYKKQ) the chain is Cytoplasmic. The chain crosses the membrane as a helical span at residues 18-38 (IFVTVLIGIVKFSIPLALPLL). Residues 19 to 307 (FVTVLIGIVK…LINSSTTLTQ (289 aa)) enclose the ABC transmembrane type-1 domain. Residues 39 to 57 (LKYVVDDIIQGGGTASDKT) lie on the Extracellular side of the membrane. Residues 58-78 (TSLFTIMAIMFALFLILRPPV) traverse the membrane as a helical segment. Residues 79–135 (EYYRQYFAQWTASKVLYDIRAKLFDHIQKLSLRFYANTRTGEVISRVINDVEQTKDF) lie on the Cytoplasmic side of the membrane. The helical transmembrane segment at 136–156 (VITGLMNIWLDMLTILIVISI) threads the bilayer. Residues 157 to 163 (MLTLDVK) are Extracellular-facing. The chain crosses the membrane as a helical span at residues 164-184 (LTLISIVLFPLYGISVKYFYG). At 185 to 243 (RLRKLTRERSQALAQVQGHLHERIQGMPVIRSFAIEDHEQAQFNEKNGHFLDKAIRHTN) the chain is on the cytoplasmic side. The helical transmembrane segment at 244-263 (WNAKTFAVVNTITDLAPLIV) threads the bilayer. The Extracellular portion of the chain corresponds to 264 to 268 (IACAG). The chain crosses the membrane as a helical span at residues 269-288 (YFVINGPLTVGTMVAFVGYI). Topologically, residues 289–580 (DRMYNPVRRL…KHLFTIQNLN (292 aa)) are cytoplasmic. An ABC transporter domain is found at 341–576 (VEFQNVSFQY…ESQYKHLFTI (236 aa)). 375–382 (GMSGGGKS) provides a ligand contact to ATP.

It belongs to the ABC transporter superfamily. As to quaternary structure, homodimer.

It localises to the cell membrane. Functionally, may be involved in multidrug export. Transmembrane domains (TMD) form a pore in the cell membrane and the ATP-binding domain (NBD) is responsible for energy generation. In Bacillus subtilis (strain 168), this protein is Putative multidrug export ATP-binding/permease protein YgaD (ygaD).